We begin with the raw amino-acid sequence, 350 residues long: tRNA uridine(34) hydroxylase (350 aa).

The 95-residue stretch at 146–240 folds into the Rhodanese domain; it reads DDPDAVFIDM…YARRAREQGL (95 aa). Cysteine 200 (cysteine persulfide intermediate) is an active-site residue. Residues 319 to 328 are compositionally biased toward basic and acidic residues; that stretch reads RRRRAGRENG. The tract at residues 319–350 is disordered; that stretch reads RRRRAGRENGNKIFNKSRGRLNSKLSIPDPAE.

The protein belongs to the TrhO family.

It catalyses the reaction uridine(34) in tRNA + AH2 + O2 = 5-hydroxyuridine(34) in tRNA + A + H2O. In terms of biological role, catalyzes oxygen-dependent 5-hydroxyuridine (ho5U) modification at position 34 in tRNAs. The sequence is that of tRNA uridine(34) hydroxylase from Salmonella choleraesuis (strain SC-B67).